Reading from the N-terminus, the 612-residue chain is Glycosyltransferase 25 family member (612 aa).

The N-terminal stretch at 1-20 (MNKQVIFGLLLACILVCISG) is a signal peptide. N-linked (GlcNAc...) asparagine glycans are attached at residues Asn-106, Asn-227, Asn-263, and Asn-524. The Prevents secretion from ER motif lies at 609 to 612 (HQEL).

Belongs to the glycosyltransferase 25 family.

It localises to the endoplasmic reticulum lumen. The chain is Glycosyltransferase 25 family member from Drosophila melanogaster (Fruit fly).